Reading from the N-terminus, the 291-residue chain is Nucleotide-binding protein jk1004 (291 aa).

16–23 (GMSGAGRR) is an ATP binding site. Residue 67 to 70 (DVRS) coordinates GTP.

It belongs to the RapZ-like family.

In terms of biological role, displays ATPase and GTPase activities. The sequence is that of Nucleotide-binding protein jk1004 from Corynebacterium jeikeium (strain K411).